A 457-amino-acid chain; its full sequence is Allantoinase (457 aa).

Zn(2+) is bound by residues H58, H60, K145, H181, H237, and D310. N6-carboxylysine is present on K145.

The protein belongs to the metallo-dependent hydrolases superfamily. Allantoinase family. In terms of assembly, homotetramer. Zn(2+) is required as a cofactor. Carboxylation allows a single lysine to coordinate two zinc ions.

The enzyme catalyses (S)-allantoin + H2O = allantoate + H(+). The protein operates within nitrogen metabolism; (S)-allantoin degradation; allantoate from (S)-allantoin: step 1/1. Functionally, catalyzes the conversion of allantoin (5-ureidohydantoin) to allantoic acid by hydrolytic cleavage of the five-member hydantoin ring. This Solibacter usitatus (strain Ellin6076) protein is Allantoinase.